Reading from the N-terminus, the 178-residue chain is Sec-independent protein translocase protein TatB (178 aa).

A helical transmembrane segment spans residues 1–21 (MFDIGWSELLVIGVVALIAIG). The segment at 146-178 (LAIVREIKPEPQPQPADGAAPAEPERLKDAKAS) is disordered. Residues 168–178 (EPERLKDAKAS) are compositionally biased toward basic and acidic residues.

Belongs to the TatB family. The Tat system comprises two distinct complexes: a TatABC complex, containing multiple copies of TatA, TatB and TatC subunits, and a separate TatA complex, containing only TatA subunits. Substrates initially bind to the TatABC complex, which probably triggers association of the separate TatA complex to form the active translocon.

It localises to the cell inner membrane. Part of the twin-arginine translocation (Tat) system that transports large folded proteins containing a characteristic twin-arginine motif in their signal peptide across membranes. Together with TatC, TatB is part of a receptor directly interacting with Tat signal peptides. TatB may form an oligomeric binding site that transiently accommodates folded Tat precursor proteins before their translocation. The sequence is that of Sec-independent protein translocase protein TatB from Bradyrhizobium sp. (strain ORS 278).